The sequence spans 214 residues: Redox-sensing transcriptional repressor Rex (214 aa).

Positions 17-56 (LYYRIFKRFHADQVEKASSKQIADAMGIDSATVRRDFSYF) form a DNA-binding region, H-T-H motif. 91-96 (GCGNIG) contacts NAD(+).

The protein belongs to the transcriptional regulatory Rex family. Homodimer.

It is found in the cytoplasm. In terms of biological role, modulates transcription in response to changes in cellular NADH/NAD(+) redox state. This Streptococcus pyogenes serotype M12 (strain MGAS9429) protein is Redox-sensing transcriptional repressor Rex.